We begin with the raw amino-acid sequence, 80 residues long: Small ribosomal subunit protein bS18c (80 aa).

Residues 1–19 are compositionally biased toward basic residues; that stretch reads MKKFISRPKRSSRRRKKTP. The interval 1-24 is disordered; it reads MKKFISRPKRSSRRRKKTPIKPGE.

Belongs to the bacterial ribosomal protein bS18 family. As to quaternary structure, part of the 30S ribosomal subunit.

The protein resides in the plastid. It localises to the chloroplast. The chain is Small ribosomal subunit protein bS18c from Staurastrum punctulatum (Green alga).